The sequence spans 313 residues: MDTYARVIRNTVEVVTDEELRSLLDRPVRKVYAGYEPSGEIHLGHLVTINKLIDLRDAGFEVTVLLADLHAFLNRKGTMEEVKKLAEYNRRCFEGLGLTDIKYVLGSSFQLSPEYQILVHELSQAITLNRAKRSMDEVGRQMDNPTVSQMVYPIMQMADIAMLGVDAALGGIDQRKIHMLAREYLPSKNYPSPVCIHVPILQGLDGKKMSSSQGNYISVAESEEDIRKKMKKAFCPPEVEDNPVLQVLQHHIFPRLDTVTIERPEKFGGNRTFGSYEEMEQAYAKGEIHPADLKTAVAESLITILAPVREYLK.

Y32 contacts L-tyrosine. The short motif at 37–45 (PSGEIHLGH) is the 'HIGH' region element. Residues Y152, Q156, D159, and Q174 each contribute to the L-tyrosine site. Positions 208–212 (KMSSS) match the 'KMSKS' region motif. An ATP-binding site is contributed by S211.

The protein belongs to the class-I aminoacyl-tRNA synthetase family. TyrS type 3 subfamily. Homodimer.

It is found in the cytoplasm. The catalysed reaction is tRNA(Tyr) + L-tyrosine + ATP = L-tyrosyl-tRNA(Tyr) + AMP + diphosphate + H(+). Catalyzes the attachment of tyrosine to tRNA(Tyr) in a two-step reaction: tyrosine is first activated by ATP to form Tyr-AMP and then transferred to the acceptor end of tRNA(Tyr). This Methanospirillum hungatei JF-1 (strain ATCC 27890 / DSM 864 / NBRC 100397 / JF-1) protein is Tyrosine--tRNA ligase.